A 312-amino-acid polypeptide reads, in one-letter code: ADP-L-glycero-D-manno-heptose-6-epimerase (312 aa).

Residues phenylalanine 10–isoleucine 11, aspartate 31–asparagine 32, lysine 38, lysine 53, glutamate 75–serine 79, and asparagine 92 contribute to the NADP(+) site. The Proton acceptor role is filled by tyrosine 140. Lysine 144 serves as a coordination point for NADP(+). Asparagine 169 provides a ligand contact to substrate. Positions 170 and 178 each coordinate NADP(+). Lysine 178 serves as the catalytic Proton acceptor. Substrate-binding positions include serine 180, histidine 187, phenylalanine 201–serine 204, arginine 209, and tyrosine 274.

Belongs to the NAD(P)-dependent epimerase/dehydratase family. HldD subfamily. Homopentamer. NADP(+) is required as a cofactor.

It catalyses the reaction ADP-D-glycero-beta-D-manno-heptose = ADP-L-glycero-beta-D-manno-heptose. The protein operates within nucleotide-sugar biosynthesis; ADP-L-glycero-beta-D-manno-heptose biosynthesis; ADP-L-glycero-beta-D-manno-heptose from D-glycero-beta-D-manno-heptose 7-phosphate: step 4/4. In terms of biological role, catalyzes the interconversion between ADP-D-glycero-beta-D-manno-heptose and ADP-L-glycero-beta-D-manno-heptose via an epimerization at carbon 6 of the heptose. In Proteus mirabilis (strain HI4320), this protein is ADP-L-glycero-D-manno-heptose-6-epimerase.